The sequence spans 158 residues: Regulator of G-protein signaling 13 (158 aa).

Positions 34–150 constitute an RGS domain; the sequence is SLESLMATKY…LKSEMYQQLL (117 aa).

Inhibits signal transduction by increasing the GTPase activity of G protein alpha subunits thereby driving them into their inactive GDP-bound form. Binds to both G(i)-alpha and G(q)-alpha. The protein is Regulator of G-protein signaling 13 (Rgs13) of Mus musculus (Mouse).